The chain runs to 503 residues: uncharacterized protein (503 aa).

Helical transmembrane passes span 20–40 (FIAF…VLTM), 43–63 (LGPF…GVML), 106–126 (VSLT…LSFA), 138–158 (LIGL…ISLF), 166–186 (AILF…ILGI), 215–235 (VIST…LTAI), 249–269 (LLMF…ISGI), 301–321 (YLGI…SLAS), 359–379 (VWAS…VPFL), 405–425 (LAVL…FMIL), 443–463 (GVSF…ITAW), and 468–488 (TFKL…FIHS).

It to M.genitalium MG225.

The protein localises to the cell membrane. This is an uncharacterized protein from Mycoplasma pneumoniae (strain ATCC 29342 / M129 / Subtype 1) (Mycoplasmoides pneumoniae).